The following is a 115-amino-acid chain: U3-lycotoxin-Ls1f (115 aa).

A signal peptide spans 1–20; that stretch reads MKFVLLFGVLLVTLFSYSSA. A propeptide spanning residues 21 to 44 is cleaved from the precursor; sequence EMLDDFDQADEDELLSLIEKEEAR. 4 disulfides stabilise this stretch: Cys48-Cys63, Cys55-Cys72, Cys62-Cys87, and Cys74-Cys85.

Belongs to the neurotoxin 19 (CSTX) family. 01 subfamily. In terms of tissue distribution, expressed by the venom gland.

The protein resides in the secreted. This chain is U3-lycotoxin-Ls1f, found in Lycosa singoriensis (Wolf spider).